Reading from the N-terminus, the 424-residue chain is Glutamate-1-semialdehyde 2,1-aminomutase (424 aa).

Position 266 is an N6-(pyridoxal phosphate)lysine (Lys266).

This sequence belongs to the class-III pyridoxal-phosphate-dependent aminotransferase family. HemL subfamily. Homodimer. Requires pyridoxal 5'-phosphate as cofactor.

The protein localises to the cytoplasm. The enzyme catalyses (S)-4-amino-5-oxopentanoate = 5-aminolevulinate. It participates in porphyrin-containing compound metabolism; protoporphyrin-IX biosynthesis; 5-aminolevulinate from L-glutamyl-tRNA(Glu): step 2/2. The protein is Glutamate-1-semialdehyde 2,1-aminomutase of Thermus thermophilus (strain ATCC 27634 / DSM 579 / HB8).